The primary structure comprises 413 residues: 1-deoxy-D-xylulose 5-phosphate reductoisomerase (413 aa).

8 residues coordinate NADPH: T28, G29, S30, I31, G54, R55, N56, and N142. K143 provides a ligand contact to 1-deoxy-D-xylulose 5-phosphate. E144 provides a ligand contact to NADPH. D168 is a binding site for Mn(2+). 1-deoxy-D-xylulose 5-phosphate is bound by residues S169, E170, S194, and H217. Position 170 (E170) interacts with Mn(2+). Position 223 (G223) interacts with NADPH. Residues S230, N235, K236, and E239 each contribute to the 1-deoxy-D-xylulose 5-phosphate site. Position 239 (E239) interacts with Mn(2+).

Belongs to the DXR family. Requires Mg(2+) as cofactor. The cofactor is Mn(2+).

The enzyme catalyses 2-C-methyl-D-erythritol 4-phosphate + NADP(+) = 1-deoxy-D-xylulose 5-phosphate + NADPH + H(+). It functions in the pathway isoprenoid biosynthesis; isopentenyl diphosphate biosynthesis via DXP pathway; isopentenyl diphosphate from 1-deoxy-D-xylulose 5-phosphate: step 1/6. In terms of biological role, catalyzes the NADPH-dependent rearrangement and reduction of 1-deoxy-D-xylulose-5-phosphate (DXP) to 2-C-methyl-D-erythritol 4-phosphate (MEP). The sequence is that of 1-deoxy-D-xylulose 5-phosphate reductoisomerase from Thermosynechococcus vestitus (strain NIES-2133 / IAM M-273 / BP-1).